The sequence spans 317 residues: Ribosomal protein L11 methyltransferase (317 aa).

Residues Thr-158, Gly-179, Asp-201, and Asn-244 each coordinate S-adenosyl-L-methionine.

The protein belongs to the methyltransferase superfamily. PrmA family.

It localises to the cytoplasm. The catalysed reaction is L-lysyl-[protein] + 3 S-adenosyl-L-methionine = N(6),N(6),N(6)-trimethyl-L-lysyl-[protein] + 3 S-adenosyl-L-homocysteine + 3 H(+). Its function is as follows. Methylates ribosomal protein L11. The polypeptide is Ribosomal protein L11 methyltransferase (Streptococcus thermophilus (strain CNRZ 1066)).